The chain runs to 698 residues: Protein SST2 (698 aa).

Residues 10-203 (ELSSKNFSRT…GAKPNVWSPT (194 aa)) form a fungal-DR region. A Phosphoserine modification is found at Ser-252. One can recognise a DEP domain in the interval 273-358 (SNAGIRLFEN…SRSSFFTLSK (86 aa)). Ser-408 is subject to Phosphoserine. One can recognise an RGS domain in the interval 420–689 (KLDYVLTDPG…TQSDVYKDAS (270 aa)). The residue at position 539 (Ser-539) is a Phosphoserine; by MAPK. Residues 545-586 (FPTNLYDPSPASAESAASSISSTEADTLGEPPEVSLKPSKNL) are disordered. Residues 551–570 (DPSPASAESAASSISSTEAD) show a composition bias toward low complexity. Phosphoserine is present on Ser-587.

Phosphorylated by FUS3 and KSS1.

In terms of biological role, desensitization to alpha-factor pheromone. Is involved in regulating the signaling pathway for responding to mating pheromone. The sequence is that of Protein SST2 (SST2) from Saccharomyces cerevisiae (strain ATCC 204508 / S288c) (Baker's yeast).